The chain runs to 581 residues: MTIIHNPKWWKEATVYQIYPASFKDSNNDGWGDLAGITSKLDYVKELGVDAIWVCPFYDSPQEDMGYDIANYEKVWPRYGTNEDCFQMIEEAHKRGIKVIVDLVINHCSEEHEWFKESRSSKANPKRDWFFWRPPKGYDEKGNPIPPNNWRSFFGGSAWRYDEKTGEFFLHVFALGQPDFNWENEECRKAIYDSSVGYWLRHNVDGFRIDVGSMYSKVEGLPDAPITDPTVPYQKGTEFFINGPRIHEYHKEMHNYMLSQVPEGKEIMTVGEVGIGNEDDFRVYTSAKEGELNMMFNFKHTSVGENPKCKYELIPFTLKDFKLALAESFLFIENTDCWSTIYLENHDQPRSVSRFGSDSPKWREISSKMLATLIISLTGTVFIYQGQELGMPNFKNRKIEQIKCVEGTGTYAAIKRDYGEDSEKMKKFFEALALISRDHGRTPFPWSADEPSAGFSKDAKPWIDMNESFRDGINAEAELKDKNSVFFFWKKALQVRKEHKDILVYGHNFQFIDLDNDKLFMFTKDTDNKKMFAVFNFSSDNTDFSVPDNEASYTMFFGNYANSNGDSRTLQPWEGRLYLLK.

Catalysis depends on Asp-210, which acts as the Nucleophile. Residue Glu-272 is the Proton donor of the active site.

The protein belongs to the glycosyl hydrolase 13 family.

The catalysed reaction is Hydrolysis of (1-&gt;6)-alpha-D-glucosidic linkages in some oligosaccharides produced from starch and glycogen by alpha-amylase, and in isomaltose.. In terms of biological role, alpha-glucosidase with specificity for isomaltose, maltose, and palatinose. The sequence is that of Oligo-1,6-glucosidase IMA5 (IMA5) from Saccharomyces cerevisiae (strain ATCC 204508 / S288c) (Baker's yeast).